We begin with the raw amino-acid sequence, 495 residues long: ATP synthase subunit beta, chloroplastic (495 aa).

Gly172 to Thr179 is a binding site for ATP.

The protein belongs to the ATPase alpha/beta chains family. F-type ATPases have 2 components, CF(1) - the catalytic core - and CF(0) - the membrane proton channel. CF(1) has five subunits: alpha(3), beta(3), gamma(1), delta(1), epsilon(1). CF(0) has four main subunits: a(1), b(1), b'(1) and c(9-12).

The protein localises to the plastid. It localises to the chloroplast thylakoid membrane. It catalyses the reaction ATP + H2O + 4 H(+)(in) = ADP + phosphate + 5 H(+)(out). In terms of biological role, produces ATP from ADP in the presence of a proton gradient across the membrane. The catalytic sites are hosted primarily by the beta subunits. The protein is ATP synthase subunit beta, chloroplastic of Barnardia japonica (Chinese squill).